The following is a 281-amino-acid chain: MSHGTYYECEPRGGQQPLEFSGGRAGPGELGDMCEHEASIDLSAYIESGEEQLLSDLFAMKPTPEARSLKGPGAPSFPHYLPADPRPFAYPSHTFGPDRKALGPGIYSNPGSYDPRAVAVKEEPRGPEGNRGTSRGSYNPLQYQVAHCGQTAVHLPPTLAAPGQPLRVLKAPVAAAAPPCSPLLKAPSPAGPSHKGKKAVNKDSLEYRLRRERNNIAVRKSRDKAKRRIMETQQKVLEYMAENERLRNRVDQLTQELDTLRNLFRQIPEAASLIKGVGGCS.

The segment at 1 to 30 (MSHGTYYECEPRGGQQPLEFSGGRAGPGEL) is disordered. Residue K121 forms a Glycyl lysine isopeptide (Lys-Gly) (interchain with G-Cter in SUMO2) linkage. Position 181 is a phosphoserine (S181). The 64-residue stretch at 204-267 (SLEYRLRRER…DTLRNLFRQI (64 aa)) folds into the bZIP domain. Residues 208–245 (RLRRERNNIAVRKSRDKAKRRIMETQQKVLEYMAENER) form a basic motif region. The segment at 246–267 (LRNRVDQLTQELDTLRNLFRQI) is leucine-zipper.

The protein belongs to the bZIP family. C/EBP subfamily. Binds DNA as a homodimer and as a heterodimer. Can form stable heterodimers with CEBPA, CEBPB and CEBPD. Interacts with GATA1 and SPI1. Interacts with SMARCD2. Phosphorylated.

It is found in the nucleus. Its function is as follows. Transcriptional activator. C/EBP are DNA-binding proteins that recognize two different motifs: the CCAAT homology common to many promoters and the enhanced core homology common to many enhancers. Required for the promyelocyte-myelocyte transition in myeloid differentiation. The sequence is that of CCAAT/enhancer-binding protein epsilon (Cebpe) from Mus musculus (Mouse).